We begin with the raw amino-acid sequence, 341 residues long: L-threonine 3-dehydrogenase (341 aa).

C38 is a binding site for Zn(2+). Catalysis depends on charge relay system residues T40 and H43. 6 residues coordinate Zn(2+): H63, E64, C93, C96, C99, and C107. NAD(+) is bound by residues I175, D195, R200, 262 to 264 (LGI), and 286 to 287 (IY).

It belongs to the zinc-containing alcohol dehydrogenase family. As to quaternary structure, homotetramer. The cofactor is Zn(2+).

Its subcellular location is the cytoplasm. The catalysed reaction is L-threonine + NAD(+) = (2S)-2-amino-3-oxobutanoate + NADH + H(+). Its pathway is amino-acid degradation; L-threonine degradation via oxydo-reductase pathway; glycine from L-threonine: step 1/2. Its function is as follows. Catalyzes the NAD(+)-dependent oxidation of L-threonine to 2-amino-3-ketobutyrate. The polypeptide is L-threonine 3-dehydrogenase (Colwellia psychrerythraea (strain 34H / ATCC BAA-681) (Vibrio psychroerythus)).